The sequence spans 427 residues: Glutamate-1-semialdehyde 2,1-aminomutase (427 aa).

N6-(pyridoxal phosphate)lysine is present on Lys-267.

It belongs to the class-III pyridoxal-phosphate-dependent aminotransferase family. HemL subfamily. As to quaternary structure, homodimer. Requires pyridoxal 5'-phosphate as cofactor.

It is found in the cytoplasm. It carries out the reaction (S)-4-amino-5-oxopentanoate = 5-aminolevulinate. The protein operates within porphyrin-containing compound metabolism; protoporphyrin-IX biosynthesis; 5-aminolevulinate from L-glutamyl-tRNA(Glu): step 2/2. This chain is Glutamate-1-semialdehyde 2,1-aminomutase, found in Desulfosudis oleivorans (strain DSM 6200 / JCM 39069 / Hxd3) (Desulfococcus oleovorans).